The sequence spans 404 residues: G1/S-specific cyclin-E2 (404 aa).

Positions 1 to 45 are disordered; the sequence is MSRRSSRLQAKQQPQASQTDSPQEAQIIQAKKRKTAQDVKKRKEE. Positions 7 to 26 are enriched in polar residues; that stretch reads RLQAKQQPQASQTDSPQEAQ. Ser21 is modified (phosphoserine). Residues 35 to 45 are compositionally biased toward basic and acidic residues; that stretch reads TAQDVKKRKEE. Lys348 carries the post-translational modification N6-lactoyllysine. A Phosphoserine modification is found at Ser383. The residue at position 392 (Thr392) is a Phosphothreonine.

It belongs to the cyclin family. Cyclin E subfamily. As to quaternary structure, interacts with the CDK2 (in vivo) and CDK3 (in vitro) protein kinases to form a serine/threonine kinase holoenzyme complex. The cyclin subunit imparts substrate specificity to the complex. Post-translationally, phosphorylation by CDK2 triggers its release from CDK2 and degradation via the ubiquitin proteasome pathway. In terms of processing, lactylated at Lys-348. Delactylated by SIRT3.

It is found in the nucleus. In terms of biological role, essential for the control of the cell cycle at the late G1 and early S phase. The protein is G1/S-specific cyclin-E2 (CCNE2) of Bos taurus (Bovine).